The following is a 175-amino-acid chain: Shikimate kinase (175 aa).

An ATP-binding site is contributed by 11–16; the sequence is GAGKTT. Thr15 contacts Mg(2+). Asp33, Arg57, and Gly79 together coordinate substrate. Arg118 contacts ATP. Residue Arg140 coordinates substrate.

Belongs to the shikimate kinase family. In terms of assembly, monomer. Requires Mg(2+) as cofactor.

It localises to the cytoplasm. It catalyses the reaction shikimate + ATP = 3-phosphoshikimate + ADP + H(+). It participates in metabolic intermediate biosynthesis; chorismate biosynthesis; chorismate from D-erythrose 4-phosphate and phosphoenolpyruvate: step 5/7. In terms of biological role, catalyzes the specific phosphorylation of the 3-hydroxyl group of shikimic acid using ATP as a cosubstrate. This Phocaeicola vulgatus (strain ATCC 8482 / DSM 1447 / JCM 5826 / CCUG 4940 / NBRC 14291 / NCTC 11154) (Bacteroides vulgatus) protein is Shikimate kinase.